The sequence spans 184 residues: MSWRSESIWIEFITGSRKTSNFCWAFILFLGSLGFLLVGTSSYLGRNFISLFASQQIIFFPQGIVMSFYGIAGLFISCYLWCTILWNVGSGYDLFDRKEGIVRIFRWGFPGKSRRIFLRFLMKDIQSIRIEVKEGVSARRVLYMEIRGQGAIPLIRTDENFTTREIEQKAAELAYFLRVPIEVF.

The next 2 helical transmembrane spans lie at 22–42 (FCWA…GTSS) and 57–77 (IIFF…LFIS).

This sequence belongs to the Ycf4 family.

It localises to the plastid. The protein resides in the chloroplast thylakoid membrane. In terms of biological role, seems to be required for the assembly of the photosystem I complex. This is Photosystem I assembly protein Ycf4 from Draba nemorosa (Woodland whitlowgrass).